Here is a 447-residue protein sequence, read N- to C-terminus: Na(+)-translocating NADH-quinone reductase subunit A (447 aa).

This sequence belongs to the NqrA family. In terms of assembly, composed of six subunits; NqrA, NqrB, NqrC, NqrD, NqrE and NqrF.

It catalyses the reaction a ubiquinone + n Na(+)(in) + NADH + H(+) = a ubiquinol + n Na(+)(out) + NAD(+). In terms of biological role, NQR complex catalyzes the reduction of ubiquinone-1 to ubiquinol by two successive reactions, coupled with the transport of Na(+) ions from the cytoplasm to the periplasm. NqrA to NqrE are probably involved in the second step, the conversion of ubisemiquinone to ubiquinol. The polypeptide is Na(+)-translocating NADH-quinone reductase subunit A (Tolumonas auensis (strain DSM 9187 / NBRC 110442 / TA 4)).